We begin with the raw amino-acid sequence, 179 residues long: MAQFSESVDVPDMGRRQFMNLLTFGTVTGVALGALYPVVNYFIPPAAGGAGGGTTAKDELGNDVSVSKFLESHNVGDRTLVQGLKGDPTYIVVESKEAITDYGINAVCTHLGCVVPWNAAENKFKCPCHGSQYDATGKVVRGPAPKSLALSHAKTENDKIVLTSWTETDFRTGEEPWWS.

Residues 21–43 traverse the membrane as a helical segment; the sequence is LLTFGTVTGVALGALYPVVNYFI. One can recognise a Rieske domain in the interval 61–162; the sequence is GNDVSVSKFL…AKTENDKIVL (102 aa). Residues C108, H110, C126, and H129 each contribute to the [2Fe-2S] cluster site. C113 and C128 are oxidised to a cystine.

It belongs to the Rieske iron-sulfur protein family. As to quaternary structure, the 4 large subunits of the cytochrome b6-f complex are cytochrome b6, subunit IV (17 kDa polypeptide, PetD), cytochrome f and the Rieske protein, while the 4 small subunits are PetG, PetL, PetM and PetN. The complex functions as a dimer. The cofactor is [2Fe-2S] cluster.

It localises to the cellular thylakoid membrane. It carries out the reaction 2 oxidized [plastocyanin] + a plastoquinol + 2 H(+)(in) = 2 reduced [plastocyanin] + a plastoquinone + 4 H(+)(out). Component of the cytochrome b6-f complex, which mediates electron transfer between photosystem II (PSII) and photosystem I (PSI), cyclic electron flow around PSI, and state transitions. The sequence is that of Cytochrome b6-f complex iron-sulfur subunit 1 from Nostoc sp. (strain PCC 7120 / SAG 25.82 / UTEX 2576).